A 29-amino-acid polypeptide reads, in one-letter code: Chassatide C1 (29 aa).

A cross-link (cyclopeptide (Gly-Asn)) is located at residues 1–29 (GDACGETCFTGICFTAGCSCNPWPTCTRN). Intrachain disulfides connect Cys4-Cys18, Cys8-Cys20, and Cys13-Cys26.

This is a cyclic peptide. In terms of tissue distribution, expressed in leaf, fruit, pedical and stem but not in root (at protein level).

Its function is as follows. Probably participates in a plant defense mechanism. The chain is Chassatide C1 from Chassalia chartacea (Chassalia curviflora).